The following is a 136-amino-acid chain: Probable disulfide formation protein (136 aa).

A helical membrane pass occupies residues 7 to 26 (NNALYFAWLICSTGTVMSIY). Cys-36 and Cys-39 are joined by a disulfide. A run of 2 helical transmembrane segments spans residues 41–60 (YQRICLFPLSIILGIATYRE) and 67–84 (YALPLSITGMVIAVYQIC). The cysteines at positions 96 and 101 are disulfide-linked. Residues 109–133 (GFITVPMASALAFCAISCLLILSGS) form a helical membrane-spanning segment.

It belongs to the DsbB family. BdbC subfamily.

It is found in the cell inner membrane. Functionally, required for disulfide bond formation in some proteins. This chain is Probable disulfide formation protein, found in Chlamydia caviae (strain ATCC VR-813 / DSM 19441 / 03DC25 / GPIC) (Chlamydophila caviae).